The sequence spans 351 residues: Protein RecA (351 aa).

67-74 serves as a coordination point for ATP; sequence GPESSGKT.

It belongs to the RecA family.

It is found in the cytoplasm. In terms of biological role, can catalyze the hydrolysis of ATP in the presence of single-stranded DNA, the ATP-dependent uptake of single-stranded DNA by duplex DNA, and the ATP-dependent hybridization of homologous single-stranded DNAs. It interacts with LexA causing its activation and leading to its autocatalytic cleavage. The chain is Protein RecA from Mannheimia succiniciproducens (strain KCTC 0769BP / MBEL55E).